The primary structure comprises 533 residues: Subtilisin-like protease 1 (533 aa).

An N-terminal signal peptide occupies residues 1–19 (MGVFRFISISLAAVSAANA). Positions 20-116 (AQILSMPHAQ…VEPDTIISVH (97 aa)) are excised as a propeptide. Positions 34–115 (SYIVMMKDDT…FVEPDTIISV (82 aa)) constitute an Inhibitor I9 domain. In terms of domain architecture, Peptidase S8 spans 126-400 (SWGLARISNP…NVLINNGGAK (275 aa)). Catalysis depends on charge relay system residues D158 and H190. Positions 175-198 (GSNQVNDGDDRDGSGHGTHTSGTM) are disordered. N233 and N251 each carry an N-linked (GlcNAc...) asparagine glycan. Residues 282-294 (NDNQDAQSSSPAS) are compositionally biased toward polar residues. The disordered stretch occupies residues 282-312 (NDNQDAQSSSPASEPSVCTVGSSAEDDSRSS). The Charge relay system role is filled by S345. Residues 378–394 (TSSITDAGPGTPTNVLI) are compositionally biased toward polar residues. The interval 378 to 512 (TSSITDAGPG…YPGGDNFDFD (135 aa)) is disordered. The span at 405-470 (NPNPAPSPSP…FPGEPFPGEP (66 aa)) shows a compositional bias: pro residues. A compositionally biased stretch (low complexity) spans 471-487 (FPGESFPGESFPGESAP). A compositionally biased stretch (pro residues) spans 488 to 502 (APAPMPPSPQHPHTP).

The protein belongs to the peptidase S8 family.

It localises to the secreted. Its function is as follows. Secreted subtilisin-like serine protease with keratinolytic activity that contributes to pathogenicity. This is Subtilisin-like protease 1 (SUB1) from Arthroderma benhamiae (strain ATCC MYA-4681 / CBS 112371) (Trichophyton mentagrophytes).